An 87-amino-acid polypeptide reads, in one-letter code: MSQAEFDKAAEDVKHLKTKPADDEMLYIYSHYKQATVGDINTERPGLLDLRGKAKWDAWNQLKGTSKEDAMKAYVNKVEDLKKKYGI.

S2 bears the N-acetylserine mark. The 86-residue stretch at 2–87 (SQAEFDKAAE…VEDLKKKYGI (86 aa)) folds into the ACB domain. K8 is modified (N6-acetyllysine; alternate). N6-succinyllysine; alternate is present on K8. K14 provides a ligand contact to an acyl-CoA. The residue at position 17 (K17) is an N6-succinyllysine. N6-acetyllysine is present on K19. Y29 is modified (phosphotyrosine). Residues 29 to 33 (YSHYK), K55, and Y74 contribute to the an acyl-CoA site. An N6-acetyllysine; alternate modification is found at K55. K55 is subject to N6-succinyllysine; alternate. An N6-(2-hydroxyisobutyryl)lysine; alternate modification is found at K55. K55 is modified (N6-malonyllysine; alternate). N6-acetyllysine; alternate is present on K77. K77 is modified (N6-succinyllysine; alternate).

The protein belongs to the ACBP family. In terms of assembly, monomer.

Its subcellular location is the endoplasmic reticulum. It localises to the golgi apparatus. Functionally, binds medium- and long-chain acyl-CoA esters with very high affinity and may function as an intracellular carrier of acyl-CoA esters. The sequence is that of Acyl-CoA-binding protein (DBI) from Canis lupus familiaris (Dog).